A 201-amino-acid polypeptide reads, in one-letter code: Orotate phosphoribosyltransferase (201 aa).

5-phospho-alpha-D-ribose 1-diphosphate is bound by residues lysine 90 and 113–121; that span reads EDIITTGGS. Orotate-binding residues include threonine 117 and arginine 145.

It belongs to the purine/pyrimidine phosphoribosyltransferase family. PyrE subfamily. As to quaternary structure, homodimer. Mg(2+) is required as a cofactor.

The enzyme catalyses orotidine 5'-phosphate + diphosphate = orotate + 5-phospho-alpha-D-ribose 1-diphosphate. It participates in pyrimidine metabolism; UMP biosynthesis via de novo pathway; UMP from orotate: step 1/2. In terms of biological role, catalyzes the transfer of a ribosyl phosphate group from 5-phosphoribose 1-diphosphate to orotate, leading to the formation of orotidine monophosphate (OMP). This is Orotate phosphoribosyltransferase from Sulfurovum sp. (strain NBC37-1).